A 155-amino-acid chain; its full sequence is Deoxyuridine 5'-triphosphate nucleotidohydrolase (155 aa).

Residues 74–76 (RSG), Asn87, and 91–93 (LID) contribute to the substrate site.

Belongs to the dUTPase family. Mg(2+) is required as a cofactor.

The enzyme catalyses dUTP + H2O = dUMP + diphosphate + H(+). The protein operates within pyrimidine metabolism; dUMP biosynthesis; dUMP from dCTP (dUTP route): step 2/2. This enzyme is involved in nucleotide metabolism: it produces dUMP, the immediate precursor of thymidine nucleotides and it decreases the intracellular concentration of dUTP so that uracil cannot be incorporated into DNA. The chain is Deoxyuridine 5'-triphosphate nucleotidohydrolase from Xylella fastidiosa (strain M23).